The sequence spans 61 residues: Small ribosomal subunit protein uS14 (61 aa).

Zn(2+) is bound by residues Cys-24, Cys-27, Cys-40, and Cys-43.

This sequence belongs to the universal ribosomal protein uS14 family. Zinc-binding uS14 subfamily. As to quaternary structure, part of the 30S ribosomal subunit. Contacts proteins S3 and S10. Zn(2+) is required as a cofactor.

Functionally, binds 16S rRNA, required for the assembly of 30S particles and may also be responsible for determining the conformation of the 16S rRNA at the A site. This is Small ribosomal subunit protein uS14 from Geotalea uraniireducens (strain Rf4) (Geobacter uraniireducens).